The sequence spans 585 residues: Protein FAM83D (585 aa).

Residues 1–296 form a DUF1669 region; the sequence is MAARFELLDD…LYAQSEPISS (296 aa). Position 295 is a phosphoserine (Ser295). 2 disordered regions span residues 334–411 and 425–482; these read LSST…TSSS and AASS…SQGS. Positions 337–585 are required for interaction with KIF22 and function in chromosome congression; it reads TPRKSNLGPE…RDIALYPPYQ (249 aa). Composition is skewed to basic and acidic residues over residues 347–360 and 369–383; these read EPPKDRAKPKRPDS and DYFHSHKDQLEDSKV. The segment covering 425 to 441 has biased composition (polar residues); it reads AASSQATVWSKSTTTQT. Ser458 carries the phosphoserine modification. Low complexity predominate over residues 458–482; sequence SPASKMSVSRSSSVRSSSSVSSQGS. Position 511 is a phosphothreonine (Thr511).

This sequence belongs to the FAM83 family. As to quaternary structure, interacts with FBXW7; promotes FBXW7 degradation. May interact with RAF1. Interacts with KIF22; recruits KIF22 to mitotic spindle microtubules. Interacts (via C-terminus) with DYNLL1. Interacts with HMMR. Directly interacts (via DUF1669) with CSNK1A1 and CSNK1A1L. Post-translationally, phosphorylated during mitosis.

The protein localises to the cytoplasm. It is found in the cytoskeleton. Its subcellular location is the spindle. It localises to the spindle pole. Through the degradation of FBXW7, may act indirectly on the expression and downstream signaling of MTOR, JUN and MYC. May play also a role in cell proliferation through activation of the ERK1/ERK2 signaling cascade. May also be important for proper chromosome congression and alignment during mitosis through its interaction with KIF22. This Mus musculus (Mouse) protein is Protein FAM83D.